Reading from the N-terminus, the 88-residue chain is Centromere protein W (88 aa).

The protein belongs to the CENP-W/WIP1 family. As to quaternary structure, heterodimer with CENPT; this dimer coassembles with CENPS-CENPX heterodimers at centromeres to form the tetrameric CENP-T-W-S-X complex, which is a subcomplex of the large constitutive centromere-associated network (CCAN, also known as the interphase centromere complex or ICEN). Interacts with NPM1. Highly expressed in ovary, liver, lung and pancreas and to a lower extent in breast and gastrointestinal tract cancers; such as those of the colon, rectum and stomach. Overexpressed in high grade breast invasive tumors. Expressed in many cancer cell types.

It localises to the nucleus. The protein resides in the chromosome. The protein localises to the centromere. Its subcellular location is the kinetochore. It is found in the nucleus matrix. It localises to the nucleolus. Its function is as follows. Component of the CENPA-NAC (nucleosome-associated) complex, a complex that plays a central role in assembly of kinetochore proteins, mitotic progression and chromosome segregation. The CENPA-NAC complex recruits the CENPA-CAD (nucleosome distal) complex and may be involved in incorporation of newly synthesized CENPA into centromeres. Part of a nucleosome-associated complex that binds specifically to histone H3-containing nucleosomes at the centromere, as opposed to nucleosomes containing CENPA. Component of the heterotetrameric CENP-T-W-S-X complex that binds and supercoils DNA, and plays an important role in kinetochore assembly. CENPW has a fundamental role in kinetochore assembly and function. It is one of the inner kinetochore proteins, with most further proteins binding downstream. Required for normal chromosome organization and normal progress through mitosis. This chain is Centromere protein W (CENPW), found in Homo sapiens (Human).